An 877-amino-acid polypeptide reads, in one-letter code: DNA mismatch repair protein MutS (877 aa).

Residue 627–634 participates in ATP binding; that stretch reads GPNMAGKS.

The protein belongs to the DNA mismatch repair MutS family.

In terms of biological role, this protein is involved in the repair of mismatches in DNA. It is possible that it carries out the mismatch recognition step. This protein has a weak ATPase activity. The polypeptide is DNA mismatch repair protein MutS (Dinoroseobacter shibae (strain DSM 16493 / NCIMB 14021 / DFL 12)).